The chain runs to 207 residues: LexA repressor (207 aa).

Residues 28–48 (RAEIAQKLGFKSANAAEEHLK) constitute a DNA-binding region (H-T-H motif). Residues serine 124 and lysine 161 each act as for autocatalytic cleavage activity in the active site.

This sequence belongs to the peptidase S24 family. Homodimer.

It carries out the reaction Hydrolysis of Ala-|-Gly bond in repressor LexA.. Functionally, represses a number of genes involved in the response to DNA damage (SOS response), including recA and lexA. In the presence of single-stranded DNA, RecA interacts with LexA causing an autocatalytic cleavage which disrupts the DNA-binding part of LexA, leading to derepression of the SOS regulon and eventually DNA repair. This chain is LexA repressor, found in Aeromonas salmonicida (strain A449).